The chain runs to 130 residues: Small ribosomal subunit protein uS8 (130 aa).

This sequence belongs to the universal ribosomal protein uS8 family. Part of the 30S ribosomal subunit.

In terms of biological role, one of the primary rRNA binding proteins, it binds directly to 16S rRNA central domain where it helps coordinate assembly of the platform of the 30S subunit. This chain is Small ribosomal subunit protein uS8, found in Thermococcus onnurineus (strain NA1).